A 156-amino-acid polypeptide reads, in one-letter code: Small ribosomal subunit protein uS7 (156 aa).

The protein belongs to the universal ribosomal protein uS7 family. In terms of assembly, part of the 30S ribosomal subunit. Contacts proteins S9 and S11.

In terms of biological role, one of the primary rRNA binding proteins, it binds directly to 16S rRNA where it nucleates assembly of the head domain of the 30S subunit. Is located at the subunit interface close to the decoding center, probably blocks exit of the E-site tRNA. The protein is Small ribosomal subunit protein uS7 of Pseudomonas syringae pv. syringae (strain B728a).